We begin with the raw amino-acid sequence, 360 residues long: Tryptophan--tRNA ligase, mitochondrial (360 aa).

The N-terminal 18 residues, 1–18, are a transit peptide targeting the mitochondrion; that stretch reads MALHSMRKARERWSFIRA. Residues Q42 and 48-51 each bind ATP; that span reads HLGN. L-tryptophan is bound at residue D167. ATP-binding positions include 179 to 181, V217, and 226 to 230; these read GED and KMSKS.

This sequence belongs to the class-I aminoacyl-tRNA synthetase family. As to expression, brain.

It localises to the mitochondrion matrix. The protein localises to the mitochondrion. The enzyme catalyses tRNA(Trp) + L-tryptophan + ATP = L-tryptophyl-tRNA(Trp) + AMP + diphosphate + H(+). Catalyzes the attachment of tryptophan to tRNA(Trp) in a two-step reaction: tryptophan is first activated by ATP to form Trp-AMP and then transferred to the acceptor end of tRNA(Trp). The sequence is that of Tryptophan--tRNA ligase, mitochondrial (WARS2) from Homo sapiens (Human).